Consider the following 21-residue polypeptide: Fibrinogen beta chain (21 aa).

Pyrrolidone carboxylic acid is present on glutamine 1. Sulfotyrosine is present on tyrosine 6.

In terms of assembly, heterohexamer; disulfide linked. Contains 2 sets of 3 non-identical chains (alpha, beta and gamma). The 2 heterotrimers are in head to head conformation with the N-termini in a small central domain. In terms of processing, conversion of fibrinogen to fibrin is triggered by thrombin, which cleaves fibrinopeptides A and B from alpha and beta chains, and thus exposes the N-terminal polymerization sites responsible for the formation of the soft clot.

It is found in the secreted. In terms of biological role, cleaved by the protease thrombin to yield monomers which, together with fibrinogen alpha (FGA) and fibrinogen gamma (FGG), polymerize to form an insoluble fibrin matrix. Fibrin has a major function in hemostasis as one of the primary components of blood clots. In addition, functions during the early stages of wound repair to stabilize the lesion and guide cell migration during re-epithelialization. Was originally thought to be essential for platelet aggregation, based on in vitro studies using anticoagulated blood. However subsequent studies have shown that it is not absolutely required for thrombus formation in vivo. Enhances expression of SELP in activated platelets. Maternal fibrinogen is essential for successful pregnancy. Fibrin deposition is also associated with infection, where it protects against IFNG-mediated hemorrhage. May also facilitate the antibacterial immune response via both innate and T-cell mediated pathways. This is Fibrinogen beta chain (FGB) from Rangifer tarandus (Reindeer).